Reading from the N-terminus, the 483-residue chain is Proline--tRNA ligase (483 aa).

It belongs to the class-II aminoacyl-tRNA synthetase family. ProS type 3 subfamily. Homodimer.

Its subcellular location is the cytoplasm. The catalysed reaction is tRNA(Pro) + L-proline + ATP = L-prolyl-tRNA(Pro) + AMP + diphosphate. Functionally, catalyzes the attachment of proline to tRNA(Pro) in a two-step reaction: proline is first activated by ATP to form Pro-AMP and then transferred to the acceptor end of tRNA(Pro). The protein is Proline--tRNA ligase of Natranaerobius thermophilus (strain ATCC BAA-1301 / DSM 18059 / JW/NM-WN-LF).